We begin with the raw amino-acid sequence, 748 residues long: Pleckstrin homology domain-containing family M member 3 (748 aa).

2 disordered regions span residues 88-107 (HAKE…PLLS) and 129-187 (NDSL…RNKN). 2 stretches are compositionally biased toward basic and acidic residues: residues 129-140 (NDSLDHLEDAPK) and 148-159 (SRSDVSHIDWKN). Polar residues predominate over residues 167 to 180 (QRSSSQGMHCTSPF). PH domains are found at residues 200-297 (NILK…EAIC) and 348-443 (NIIK…SAAN). The segment at 656–709 (SHVYSCSLCSQKGFICEICNNGEILYPFEENSTSRCENCGAVFHSDCKVRTVPC) adopts a Phorbol-ester/DAG-type zinc-finger fold.

It is found in the cytoplasm. The protein localises to the golgi apparatus. Its subcellular location is the cell membrane. Functionally, may play a role during muscle differentiation. In Xenopus laevis (African clawed frog), this protein is Pleckstrin homology domain-containing family M member 3 (plekhm3).